The primary structure comprises 129 residues: Small ribosomal subunit protein uS11 (129 aa).

Belongs to the universal ribosomal protein uS11 family. As to quaternary structure, part of the 30S ribosomal subunit. Interacts with proteins S7 and S18. Binds to IF-3.

In terms of biological role, located on the platform of the 30S subunit, it bridges several disparate RNA helices of the 16S rRNA. Forms part of the Shine-Dalgarno cleft in the 70S ribosome. The chain is Small ribosomal subunit protein uS11 from Pelotomaculum thermopropionicum (strain DSM 13744 / JCM 10971 / SI).